A 505-amino-acid polypeptide reads, in one-letter code: MAESQSQGADQAQDLNNELKARREKLVTLRENGIAFPNDFRRDSISDHLHAEFDAKENEELEELGIEVTVAGRMMTRRIMGKASFVTLQDVGGRIQLYVSRDDLAEGIYNEQFKKWDLGDILGARGKLFKTKTGELSIHCTELRLLTKALRPLPDKFHGLADQETRYRQRYLDLIANDDSRNTFRIRSNVMAAIRRFMVDNGFMEVETPMMQVIPGGASARPFITHHNALDIDMYLRIAPELYLKRLVVGGFERVFEINRNFRNEGVSPRHNPEFTMMELYMAYADYKDLIVLTENLFRTLTQDVLGSTTVVYGDQTFDFGKPFDKLTMREAICKYRPETNVADLDDLEKATAIALSLGIKIEKSWGLGRIVTEIFEETAESSLIQPTFITEYPAEVSPLARRNDQNSEITDRFEFFIGGREIGNGFSELNDAEDQAERFAQQVNAKDAGDDEAMFYDEDYVTALEHGLPPTAGLGIGIDRMVMLFTNSHTIRDVILFPAMRPQK.

The Mg(2+) site is built by glutamate 415 and glutamate 422.

The protein belongs to the class-II aminoacyl-tRNA synthetase family. As to quaternary structure, homodimer. Requires Mg(2+) as cofactor.

The protein resides in the cytoplasm. It catalyses the reaction tRNA(Lys) + L-lysine + ATP = L-lysyl-tRNA(Lys) + AMP + diphosphate. The polypeptide is Lysine--tRNA ligase (Pectobacterium atrosepticum (strain SCRI 1043 / ATCC BAA-672) (Erwinia carotovora subsp. atroseptica)).